A 426-amino-acid polypeptide reads, in one-letter code: Serine--tRNA ligase (426 aa).

L-serine is bound at residue 232-234 (TAE). 263-265 (RRE) is a binding site for ATP. An L-serine-binding site is contributed by Glu-286. ATP is bound at residue 350–353 (EISS). Ser-385 contributes to the L-serine binding site.

The protein belongs to the class-II aminoacyl-tRNA synthetase family. Type-1 seryl-tRNA synthetase subfamily. Homodimer. The tRNA molecule binds across the dimer.

It localises to the cytoplasm. It carries out the reaction tRNA(Ser) + L-serine + ATP = L-seryl-tRNA(Ser) + AMP + diphosphate + H(+). The catalysed reaction is tRNA(Sec) + L-serine + ATP = L-seryl-tRNA(Sec) + AMP + diphosphate + H(+). Its pathway is aminoacyl-tRNA biosynthesis; selenocysteinyl-tRNA(Sec) biosynthesis; L-seryl-tRNA(Sec) from L-serine and tRNA(Sec): step 1/1. Functionally, catalyzes the attachment of serine to tRNA(Ser). Is also able to aminoacylate tRNA(Sec) with serine, to form the misacylated tRNA L-seryl-tRNA(Sec), which will be further converted into selenocysteinyl-tRNA(Sec). This Fervidobacterium nodosum (strain ATCC 35602 / DSM 5306 / Rt17-B1) protein is Serine--tRNA ligase.